Consider the following 633-residue polypeptide: Kelch-like protein diablo (633 aa).

Residues 1-62 are disordered; it reads MGDLPGSTGG…ARLSHTSEKH (62 aa). Residues 7–25 are compositionally biased toward gly residues; the sequence is STGGGGGVGGGGNGGGGPT. Over residues 26 to 45 the composition is skewed to low complexity; sequence IAGTNGNSTTGPGSSTGSTG. The region spanning 80 to 147 is the BTB domain; that stretch reads CDVVLNVGGR…CYTAHIIVEE (68 aa). One can recognise a BACK domain in the interval 182–284; the sequence is CLGIRAFADT…SPKFLVGTVG (103 aa). Kelch repeat units follow at residues 331-377, 379-425, 426-472, 474-519, 521-566, and 567-613; these read VLFA…VLND, LYAV…VLDG, FLYA…VLGG, LYAI…VFNN, IYAV…VVNG, and QLYA…VMRA.

It participates in protein modification; protein ubiquitination. Its function is as follows. Probable substrate-specific adapter of an E3 ubiquitin-protein ligase complex which mediates the ubiquitination and subsequent proteasomal degradation of target proteins. May have a role in synapse differentiation and growth. This Drosophila ananassae (Fruit fly) protein is Kelch-like protein diablo.